Here is a 151-residue protein sequence, read N- to C-terminus: 3-hydroxyacyl-[acyl-carrier-protein] dehydratase FabZ (151 aa).

The active site involves histidine 56.

This sequence belongs to the thioester dehydratase family. FabZ subfamily.

The protein localises to the cytoplasm. The catalysed reaction is a (3R)-hydroxyacyl-[ACP] = a (2E)-enoyl-[ACP] + H2O. Functionally, involved in unsaturated fatty acids biosynthesis. Catalyzes the dehydration of short chain beta-hydroxyacyl-ACPs and long chain saturated and unsaturated beta-hydroxyacyl-ACPs. This is 3-hydroxyacyl-[acyl-carrier-protein] dehydratase FabZ from Nitrobacter winogradskyi (strain ATCC 25391 / DSM 10237 / CIP 104748 / NCIMB 11846 / Nb-255).